We begin with the raw amino-acid sequence, 173 residues long: Ribosomal RNA large subunit methyltransferase H (173 aa).

Residues Leu-89 and Gly-121 each contribute to the S-adenosyl-L-methionine site.

Belongs to the RNA methyltransferase RlmH family. Homodimer.

The protein localises to the cytoplasm. It carries out the reaction pseudouridine(1915) in 23S rRNA + S-adenosyl-L-methionine = N(3)-methylpseudouridine(1915) in 23S rRNA + S-adenosyl-L-homocysteine + H(+). In terms of biological role, specifically methylates the pseudouridine at position 1915 (m3Psi1915) in 23S rRNA. The sequence is that of Ribosomal RNA large subunit methyltransferase H from Chelativorans sp. (strain BNC1).